A 157-amino-acid polypeptide reads, in one-letter code: Protein Smg homolog (157 aa).

The protein belongs to the Smg family.

This Shewanella sediminis (strain HAW-EB3) protein is Protein Smg homolog.